Here is a 203-residue protein sequence, read N- to C-terminus: NADH-quinone oxidoreductase subunit C (203 aa).

Belongs to the complex I 30 kDa subunit family. As to quaternary structure, NDH-1 is composed of 14 different subunits. Subunits NuoB, C, D, E, F, and G constitute the peripheral sector of the complex.

It localises to the cell inner membrane. The enzyme catalyses a quinone + NADH + 5 H(+)(in) = a quinol + NAD(+) + 4 H(+)(out). Functionally, NDH-1 shuttles electrons from NADH, via FMN and iron-sulfur (Fe-S) centers, to quinones in the respiratory chain. The immediate electron acceptor for the enzyme in this species is believed to be ubiquinone. Couples the redox reaction to proton translocation (for every two electrons transferred, four hydrogen ions are translocated across the cytoplasmic membrane), and thus conserves the redox energy in a proton gradient. The sequence is that of NADH-quinone oxidoreductase subunit C from Polaromonas sp. (strain JS666 / ATCC BAA-500).